We begin with the raw amino-acid sequence, 258 residues long: Imidazole glycerol phosphate synthase subunit HisF (258 aa).

Residues Asp11 and Asp130 contribute to the active site.

The protein belongs to the HisA/HisF family. In terms of assembly, heterodimer of HisH and HisF.

The protein localises to the cytoplasm. The enzyme catalyses 5-[(5-phospho-1-deoxy-D-ribulos-1-ylimino)methylamino]-1-(5-phospho-beta-D-ribosyl)imidazole-4-carboxamide + L-glutamine = D-erythro-1-(imidazol-4-yl)glycerol 3-phosphate + 5-amino-1-(5-phospho-beta-D-ribosyl)imidazole-4-carboxamide + L-glutamate + H(+). It participates in amino-acid biosynthesis; L-histidine biosynthesis; L-histidine from 5-phospho-alpha-D-ribose 1-diphosphate: step 5/9. IGPS catalyzes the conversion of PRFAR and glutamine to IGP, AICAR and glutamate. The HisF subunit catalyzes the cyclization activity that produces IGP and AICAR from PRFAR using the ammonia provided by the HisH subunit. This Pectobacterium carotovorum subsp. carotovorum (strain PC1) protein is Imidazole glycerol phosphate synthase subunit HisF.